We begin with the raw amino-acid sequence, 492 residues long: Cytochrome P450 2L1 (492 aa).

Residue C436 participates in heme binding.

This sequence belongs to the cytochrome P450 family. Heme is required as a cofactor.

It is found in the endoplasmic reticulum membrane. Its subcellular location is the microsome membrane. The catalysed reaction is an organic molecule + reduced [NADPH--hemoprotein reductase] + O2 = an alcohol + oxidized [NADPH--hemoprotein reductase] + H2O + H(+). Functionally, efficient in catalyzing the monooxygenation of benzphetamine, aminopyrine, benzo(a)pyrene, progesterone, and testosterone. This is Cytochrome P450 2L1 (CYP2L1) from Panulirus argus (Caribbean spiny lobster).